Consider the following 389-residue polypeptide: Na(+)/H(+) antiporter NhaA (389 aa).

The next 11 helical transmembrane spans lie at 17–37 (ILLL…LAGL), 59–79 (LLLW…GLEV), 95–115 (SLPT…YLLF), 124–144 (AGWA…MALL), 154–174 (VFLL…IALF), 177–197 (TDLS…LVAL), 213–233 (LVLW…GVII), 261–281 (FLIL…NMSL), 287–307 (PVPV…VMLF), 328–348 (IAPV…IASL), and 363–383 (LGTL…LSKV).

Belongs to the NhaA Na(+)/H(+) (TC 2.A.33) antiporter family.

It localises to the cell inner membrane. The enzyme catalyses Na(+)(in) + 2 H(+)(out) = Na(+)(out) + 2 H(+)(in). In terms of biological role, na(+)/H(+) antiporter that extrudes sodium in exchange for external protons. This chain is Na(+)/H(+) antiporter NhaA, found in Shewanella sp. (strain MR-4).